Here is a 403-residue protein sequence, read N- to C-terminus: MEEPRCLQANCFFRGKEHSIQLSVSQAVLEVEVEERRSTKRWRGHFDAASVEDLTRKTGNFKQFGIFCSMLEAALMKSSEAVSLELLTYGDLEALRCCKVGVATRVPPSTSPLSSKRYLILVYCVEFDRIHYPLPLPYIGEADMAALRRLVQEQQDELAQLRDELRRAQQEVWRLEDERLRDKAWHQQEQRRMTKELTEVKAAEKMLRAHVKTLTAELAVCRKGRSTSATAPGCPQDRRRSNSRDSRSSSQGRLPPRSPSPAGSRPPRFNPTAFVRSREQRRQEAELRRQKLPRGTVSSGDNCRRRGRRSSSAESLQSRRSAQSSGSEADTCPQRRRGLGGPSTRSPLSASSCNSTSVASHPNRGCKQHGKENLGTEPSATLSEIDARLQALQAYISTLGTHM.

Residues 1–142 (MEEPRCLQAN…PLPLPYIGEA (142 aa)) form a head domain region. Positions 144–178 (MAALRRLVQEQQDELAQLRDELRRAQQEVWRLEDE) form a coiled coil. The tract at residues 224–377 (GRSTSATAPG…QHGKENLGTE (154 aa)) is disordered. 2 stretches are compositionally biased toward basic and acidic residues: residues 236–247 (QDRRRSNSRDSR) and 276–289 (RSREQRRQEAELRR). Low complexity-rich tracts occupy residues 310 to 328 (SSSAESLQSRRSAQSSGSE) and 349 to 360 (SASSCNSTSVAS).

The protein belongs to the CCDC61 family. Forms homodimers (via head domain).

Its subcellular location is the cytoplasm. It localises to the cytoskeleton. It is found in the microtubule organizing center. The protein resides in the centrosome. The protein localises to the centriolar satellite. Its subcellular location is the cilium basal body. Microtubule-binding centrosomal protein required for centriole cohesion, independently of the centrosome-associated protein/CEP250 and rootletin/CROCC linker. In interphase, required for anchoring microtubule at the mother centriole subdistal appendages and for centrosome positioning. During mitosis, may be involved in spindle assembly and chromatin alignment by regulating the organization of spindle microtubules into a symmetrical structure. Plays a non-essential role in ciliogenesis. This is Centrosomal protein CCDC61 (CCDC61) from Gallus gallus (Chicken).